Consider the following 604-residue polypeptide: Aspartate--tRNA(Asp/Asn) ligase (604 aa).

Glu174 lines the L-aspartate pocket. The tract at residues 198–201 is aspartate; the sequence is QLYK. Arg220 provides a ligand contact to L-aspartate. ATP-binding positions include 220 to 222 and Gln229; that span reads RDE. His460 contributes to the L-aspartate binding site. Glu494 serves as a coordination point for ATP. Arg501 is an L-aspartate binding site. ATP is bound at residue 546-549; sequence GLDR.

This sequence belongs to the class-II aminoacyl-tRNA synthetase family. Type 1 subfamily. Homodimer.

The protein resides in the cytoplasm. The enzyme catalyses tRNA(Asx) + L-aspartate + ATP = L-aspartyl-tRNA(Asx) + AMP + diphosphate. In terms of biological role, aspartyl-tRNA synthetase with relaxed tRNA specificity since it is able to aspartylate not only its cognate tRNA(Asp) but also tRNA(Asn). Reaction proceeds in two steps: L-aspartate is first activated by ATP to form Asp-AMP and then transferred to the acceptor end of tRNA(Asp/Asn). This chain is Aspartate--tRNA(Asp/Asn) ligase, found in Paracidovorax citrulli (strain AAC00-1) (Acidovorax citrulli).